The following is a 344-amino-acid chain: Holliday junction branch migration complex subunit RuvB (344 aa).

The tract at residues 1–183 (MPDRELISGD…FGLVLRLDPY (183 aa)) is large ATPase domain (RuvB-L). Residues Leu22, Arg23, Gly64, Lys67, Thr68, Thr69, 130-132 (EDF), Arg173, Tyr183, and Arg220 contribute to the ATP site. A Mg(2+)-binding site is contributed by Thr68. Positions 184 to 254 (NTEELKAIVK…VAQTALNLLD (71 aa)) are small ATPAse domain (RuvB-S). Residues 257–344 (RYGLDEIDQK…EGDHPSLFEA (88 aa)) form a head domain (RuvB-H) region. Positions 312 and 317 each coordinate DNA.

The protein belongs to the RuvB family. Homohexamer. Forms an RuvA(8)-RuvB(12)-Holliday junction (HJ) complex. HJ DNA is sandwiched between 2 RuvA tetramers; dsDNA enters through RuvA and exits via RuvB. An RuvB hexamer assembles on each DNA strand where it exits the tetramer. Each RuvB hexamer is contacted by two RuvA subunits (via domain III) on 2 adjacent RuvB subunits; this complex drives branch migration. In the full resolvosome a probable DNA-RuvA(4)-RuvB(12)-RuvC(2) complex forms which resolves the HJ.

Its subcellular location is the cytoplasm. It carries out the reaction ATP + H2O = ADP + phosphate + H(+). In terms of biological role, the RuvA-RuvB-RuvC complex processes Holliday junction (HJ) DNA during genetic recombination and DNA repair, while the RuvA-RuvB complex plays an important role in the rescue of blocked DNA replication forks via replication fork reversal (RFR). RuvA specifically binds to HJ cruciform DNA, conferring on it an open structure. The RuvB hexamer acts as an ATP-dependent pump, pulling dsDNA into and through the RuvAB complex. RuvB forms 2 homohexamers on either side of HJ DNA bound by 1 or 2 RuvA tetramers; 4 subunits per hexamer contact DNA at a time. Coordinated motions by a converter formed by DNA-disengaged RuvB subunits stimulates ATP hydrolysis and nucleotide exchange. Immobilization of the converter enables RuvB to convert the ATP-contained energy into a lever motion, pulling 2 nucleotides of DNA out of the RuvA tetramer per ATP hydrolyzed, thus driving DNA branch migration. The RuvB motors rotate together with the DNA substrate, which together with the progressing nucleotide cycle form the mechanistic basis for DNA recombination by continuous HJ branch migration. Branch migration allows RuvC to scan DNA until it finds its consensus sequence, where it cleaves and resolves cruciform DNA. In Solibacter usitatus (strain Ellin6076), this protein is Holliday junction branch migration complex subunit RuvB.